The following is a 678-amino-acid chain: Putative cyclic nucleotide-gated ion channel 15 (678 aa).

Over 1 to 81 (MGYGNSRSVR…RGQTIRRWNK (81 aa)) the chain is Cytoplasmic. Residues 82–102 (IFLIACLVSLFVDPLFFFLPV) traverse the membrane as a helical segment. At 103 to 115 (MRNEACITIGVRL) the chain is on the extracellular side. A helical membrane pass occupies residues 116–136 (EVVLTLIRSLADAFYIAQILI). Topologically, residues 137-170 (RFRTAYIAPPSRVFGRGELVIDSRKIAWRYLHKS) are cytoplasmic. Residues 171–191 (FWIHLVAALPLPQVLIWIIIP) traverse the membrane as a helical segment. At 192-203 (NLRGSPMTNTKN) the chain is on the extracellular side. The helical transmembrane segment at 204–224 (VLRFIIIFQYVPRMFLIFPLS) threads the bilayer. Topologically, residues 225 to 245 (RQIIKATGVVTETAWAGAAYN) are cytoplasmic. The chain crosses the membrane as a helical span at residues 246–266 (LMLYMLASHVLGACWYLLAVE). Residues 267-364 (RQEACWRHAC…GQNLATSTYA (98 aa)) lie on the Extracellular side of the membrane. Residues 365-385 (GEILFAIIIATLGLVLFALLI) form a helical membrane-spanning segment. Over 386–678 (GNMQTYLQST…KPVEPDFSSE (293 aa)) the chain is Cytoplasmic. A nucleoside 3',5'-cyclic phosphate is bound by residues 471–595 (LFDQ…TKQL) and Glu-542. The interval 587-602 (FRRLHTKQLRHKFRFY) is calmodulin-binding. The IQ domain maps to 607–638 (RTWAACFIQAAWRRHRKRKYKTELRAKEEFHY). Over residues 656–668 (RSGSDSGMMSSIQ) the composition is skewed to polar residues. The segment at 656-678 (RSGSDSGMMSSIQKPVEPDFSSE) is disordered.

Belongs to the cyclic nucleotide-gated cation channel (TC 1.A.1.5) family. In terms of assembly, homotetramer or heterotetramer.

The protein localises to the cell membrane. In terms of biological role, putative cyclic nucleotide-gated ion channel. The chain is Putative cyclic nucleotide-gated ion channel 15 (CNGC15) from Arabidopsis thaliana (Mouse-ear cress).